A 384-amino-acid polypeptide reads, in one-letter code: S-adenosylmethionine synthase (384 aa).

Histidine 15 contacts ATP. A Mg(2+)-binding site is contributed by aspartate 17. Glutamate 43 contributes to the K(+) binding site. L-methionine contacts are provided by glutamate 56 and glutamine 99. The interval 99 to 109 is flexible loop; it reads QSPDINQGVDK. ATP contacts are provided by residues 164–166, 230–231, aspartate 239, 245–246, alanine 262, and lysine 266; these read DAK, RF, and RK. L-methionine is bound at residue aspartate 239. Residue lysine 270 coordinates L-methionine.

This sequence belongs to the AdoMet synthase family. In terms of assembly, homotetramer; dimer of dimers. It depends on Mg(2+) as a cofactor. Requires K(+) as cofactor.

The protein localises to the cytoplasm. It carries out the reaction L-methionine + ATP + H2O = S-adenosyl-L-methionine + phosphate + diphosphate. Its pathway is amino-acid biosynthesis; S-adenosyl-L-methionine biosynthesis; S-adenosyl-L-methionine from L-methionine: step 1/1. Its function is as follows. Catalyzes the formation of S-adenosylmethionine (AdoMet) from methionine and ATP. The overall synthetic reaction is composed of two sequential steps, AdoMet formation and the subsequent tripolyphosphate hydrolysis which occurs prior to release of AdoMet from the enzyme. The polypeptide is S-adenosylmethionine synthase (Aliivibrio salmonicida (strain LFI1238) (Vibrio salmonicida (strain LFI1238))).